The following is a 302-amino-acid chain: uncharacterized protein (302 aa).

Residues 13–89 form the S4 RNA-binding domain; it reads QTLFKFLKKT…VNLDIVYEDN (77 aa). Asp-141 is an active-site residue.

Belongs to the pseudouridine synthase RluA family.

The enzyme catalyses a uridine in RNA = a pseudouridine in RNA. This is an uncharacterized protein from Mycoplasma capricolum subsp. capricolum (strain California kid / ATCC 27343 / NCTC 10154).